The sequence spans 436 residues: Probable ABC transporter binding protein NosD (436 aa).

A signal peptide spans 1–27 (MFKAQATFSRYSAAVSLLLLFSGAAQA). PbH1 repeat units lie at residues 85–113 (APDV…FILP), 115–136 (AERA…FVDG), 137–166 (TRDV…HLFA), 167–188 (VSGA…YIDT), 189–210 (SNGN…HYMF), 233–255 (SRKL…LMNY), 293–314 (SLFN…HLTA), and 316–354 (SEDN…YWSD).

This sequence belongs to the NosD family. The complex may be composed of an ATP-binding protein (NosF), a transmembrane protein (NosY) and a solute-binding protein (NosD).

It localises to the periplasm. Required for the assembly of the copper chromophores of nitrous oxide reductase. Could be part of the ABC transporter complex NosDFY. The protein is Probable ABC transporter binding protein NosD of Stutzerimonas stutzeri (Pseudomonas stutzeri).